The following is a 186-amino-acid chain: Imidazoleglycerol-phosphate dehydratase (186 aa).

It belongs to the imidazoleglycerol-phosphate dehydratase family.

Its subcellular location is the cytoplasm. It carries out the reaction D-erythro-1-(imidazol-4-yl)glycerol 3-phosphate = 3-(imidazol-4-yl)-2-oxopropyl phosphate + H2O. Its pathway is amino-acid biosynthesis; L-histidine biosynthesis; L-histidine from 5-phospho-alpha-D-ribose 1-diphosphate: step 6/9. The sequence is that of Imidazoleglycerol-phosphate dehydratase from Dictyoglomus turgidum (strain DSM 6724 / Z-1310).